A 412-amino-acid chain; its full sequence is Probable beta-1,4-xylosyltransferase IRX10 (412 aa).

Residues 1–21 (MKIHSCLSAILLFLFFSASSA) traverse the membrane as a helical; Signal-anchor for type II membrane protein segment. The Lumenal segment spans residues 22 to 412 (KQNVRTERIS…AGPVADLKPW (391 aa)). N-linked (GlcNAc...) asparagine glycosylation is found at Asn-139 and Asn-400.

The protein belongs to the glycosyltransferase 47 family. As to expression, limited to xylem cells. Expressed in the root tip, xylem cells of roots, and in the vasculature of roots, cotyledons and leaves.

The protein resides in the golgi apparatus membrane. Its function is as follows. Involved in the synthesis of the hemicellulose glucuronoxylan, a major component of secondary cell walls. Probably involved in the elongation of glucuronoxylan xylosyl backbone, especially in the formation of GlcUA side chain of xylans. In Arabidopsis thaliana (Mouse-ear cress), this protein is Probable beta-1,4-xylosyltransferase IRX10 (IRX10).